The chain runs to 103 residues: Small ribosomal subunit protein uS10 (103 aa).

The protein belongs to the universal ribosomal protein uS10 family. As to quaternary structure, part of the 30S ribosomal subunit.

Functionally, involved in the binding of tRNA to the ribosomes. The sequence is that of Small ribosomal subunit protein uS10 from Blochmanniella pennsylvanica (strain BPEN).